Consider the following 88-residue polypeptide: Small ribosomal subunit protein uS15c (88 aa).

This sequence belongs to the universal ribosomal protein uS15 family. As to quaternary structure, part of the 30S ribosomal subunit.

Its subcellular location is the plastid. It localises to the chloroplast. The polypeptide is Small ribosomal subunit protein uS15c (rps15) (Calycanthus floridus var. glaucus (Eastern sweetshrub)).